The chain runs to 522 residues: Cyclic GMP-AMP synthase (522 aa).

Residues 1–144 (MQPWHGKAMQ…PPGPWDVPSP (144 aa)) form a disordered region. DNA-binding stretches follow at residues 1 to 160 (MQPW…DAAP) and 173 to 215 (KLSR…GSYY). An N6-acetyllysine modification is found at K7. Phosphoserine is present on S13. The residue at position 21 (K21) is an N6-acetyllysine. Phosphoserine is present on S37. Residues K47, K50, K56, K62, and K63 each carry the N6-acetyllysine modification. S64 carries the phosphoserine modification. Residues 64–73 (SAPDTQERPP) are compositionally biased toward basic and acidic residues. The required for association with the cell membrane stretch occupies residues 64–75 (SAPDTQERPPVR). At T68 the chain carries Phosphothreonine. K82 and K83 each carry N6-acetyllysine. Positions 88 to 97 (AQDTQPSDAT) are enriched in polar residues. A Phosphothreonine modification is found at T91. Residues S98, S116, and S129 each carry the phosphoserine modification. Over residues 98–118 (SAPGAEGLEPPAAREPALSRA) the composition is skewed to low complexity. A required for activation upon DNA viral infection region spans residues 120 to 160 (SCRQRGARCSTKPRPPPGPWDVPSPGLPVSAPILVRRDAAP). Position 131 is an N6-lactoyllysine (K131). Pro residues predominate over residues 132–144 (PRPPPGPWDVPSP). A Phosphoserine modification is found at S143. The Nuclear export signal motif lies at 169–174 (LEKLKL). K173 participates in a covalent cross-link: Glycyl lysine isopeptide (Lys-Gly) (interchain with G-Cter in ubiquitin). D191 is modified (polyADP-ribosyl aspartic acid). N210 is modified ((Microbial infection) Deamidated asparagine; by herpes simplex virus 1/HHV-1 UL37). Position 211 (T211) interacts with GTP. S213 bears the Phosphoserine mark. S213 contributes to the ATP binding site. Position 215 is a phosphotyrosine; by BLK (Y215). The Mg(2+) site is built by E225 and D227. 225–227 (EFD) is an ATP binding site. D227 is a 2',3'-cGAMP binding site. K231 is covalently cross-linked (Glycyl lysine isopeptide (Lys-Gly) (interchain with G-Cter in SUMO)). K285 participates in a covalent cross-link: Glycyl lysine isopeptide (Lys-Gly) (interchain with G-Cter in ubiquitin). At E286 the chain carries 5-glutamyl polyglutamate. Residues 295–305 (DVIMKRKRGGS) carry the Nuclear localization signal motif. The KRKR-loop motif lies at 299-302 (KRKR). A Phosphoserine; by CDK1 and PKB modification is found at S305. 5-glutamyl glutamate is present on E314. D319 serves as a coordination point for GTP. Position 319 (D319) interacts with Mg(2+). D319 lines the 2',3'-cGAMP pocket. The interval 341-382 (QNWLSAKVRKQLRLKPFYLVPKHAKEGNGFQEETWRLSFSHI) is interaction with collided ribosomes. Residue K347 forms a Glycyl lysine isopeptide (Lys-Gly) (interchain with G-Cter in SUMO); alternate linkage. K347 participates in a covalent cross-link: Glycyl lysine isopeptide (Lys-Gly) (interchain with G-Cter in ubiquitin); alternate. Residues K362 and R376 each contribute to the 2',3'-cGAMP site. 376 to 383 (RLSFSHIE) is a GTP binding site. An ATP-binding site is contributed by 380–383 (SHIE). K384 carries the N6-acetyllysine modification. K384 participates in a covalent cross-link: Glycyl lysine isopeptide (Lys-Gly) (interchain with G-Cter in SUMO); alternate. K384 is covalently cross-linked (Glycyl lysine isopeptide (Lys-Gly) (interchain with G-Cter in ubiquitin); alternate). Residues 384 to 407 (KEILNNHGKSKTCCENKEEKCCRK) are DNA-binding. N389 carries the post-translational modification (Microbial infection) Deamidated asparagine; by herpes simplex virus 1/HHV-1 UL37. Residue H390 participates in Zn(2+) binding. An N6-acetyllysine mark is found at K392 and K394. K394 participates in a covalent cross-link: Glycyl lysine isopeptide (Lys-Gly) (interchain with G-Cter in SUMO). Residues C396, C397, and C404 each contribute to the Zn(2+) site. S-palmitoyl cysteine attachment occurs at residues C404 and C405. Glycyl lysine isopeptide (Lys-Gly) (interchain with G-Cter in ubiquitin) cross-links involve residues K411, K414, K427, and K428. Position 414 is an N6-acetyllysine (K414). An ATP-binding site is contributed by K414. A KKH-loop motif is present at residues 427–429 (KKH). S434 and S435 each carry phosphoserine. An ATP-binding site is contributed by 435 to 439 (SYHVK). A (Microbial infection) Deamidated glutamine; by herpes simplex virus 1/HHV-1 UL37 mark is found at Q451 and Q454. C474 is lipidated: S-palmitoyl cysteine. K479 participates in a covalent cross-link: Glycyl lysine isopeptide (Lys-Gly) (interchain with G-Cter in SUMO); alternate. K479 participates in a covalent cross-link: Glycyl lysine isopeptide (Lys-Gly) (interchain with G-Cter in ubiquitin); alternate. K506 bears the N6-methyllysine mark.

Belongs to the mab-21 family. In terms of assembly, monomer in the absence of DNA. Homodimer in presence of dsDNA: forms a 2:2 dimer with two enzymes binding to two DNA molecules. Interacts with nucleosomes; interaction is mainly mediated via histones H2A and H2B and inactivates the nucleotidyltransferase activity by blocking DNA-binding and subsequent activation. Interacts with PQBP1 (via WW domain). Interacts with TRIM14; this interaction recruits USP14, leading to deubiquitinate and stabilize CGAS and promote type I interferon production. Interacts with ZCCHC3; promoting sensing of dsDNA by CGAS. Interacts (when not monomethylated) with (poly-ADP-ribosylated) PARP1; interaction takes place in the nucleus and prevents the formation of the PARP1-TIMELESS complex. Interacts (when monomethylated) with SGF29; interaction with SGF29 prevents interaction with PARP1. Interacts with PCBP2; preventing the formation of liquid-like droplets in which CGAS is activated. Interacts with IRGM; promoting CGAS degradation. Interacts with DDX41. (Microbial infection) Interacts with herpes virus 8/HHV-8 protein ORF52; this interaction inhibits cGAS enzymatic activity by preventing the formation of liquid-like droplets by CGAS. As to quaternary structure, (Microbial infection) Interacts with herpes simplex virus 1 protein UL37; this interaction deaminates CGAS and inhibits its activation. In terms of assembly, (Microbial infection) Interacts with vaccinia virus protein OPG067; this interaction promotes CGAS proteasomal degradation. (Microbial infection) Interacts with cytomegalovirus protein UL31; this interaction promotes dissociation of DNA from CGAS, thereby inhibiting the enzymatic activity of CGAS. As to quaternary structure, (Microbial infection) Interacts with herpes simplex virus 1 tegument protein VP22 (UL49); this interaction inhibits cGAS enzymatic activity by preventing the formation of liquid-like droplets by CGAS. In terms of assembly, (Microbial infection) Interacts with herpesvirus 3 tegument protein VP22 (ORF9); this interaction inhibits cGAS enzymatic activity by preventing the formation of liquid-like droplets by CGAS. (Microbial infection) Interacts with human cytomegalovirus proteins UL42 and UL83; these interactions result in the inhibition of cGAS-STING signaling. Mg(2+) serves as cofactor. The cofactor is Mn(2+). Requires Zn(2+) as cofactor. In terms of processing, the N-terminal disordered part (1-160) is phosphorylated by AURKB during the G2-M transition, blocking CGAS liquid phase separation and preventing activation. Phosphorylation at Tyr-215 by BLK promotes cytosolic retention. Localizes into the nucleus following dephosphorylation at Tyr-215. Phosphorylation at Ser-435 activates the nucleotidyltransferase activity. Dephosphorylation at Ser-435 by PPP6C impairs its ability to bind GTP, thereby inactivating it. Phosphorylation at Thr-68 and Ser-213 by PRKDC inhibits its cyclic GMP-AMP synthase activity by impairing homodimerization and activation. Phosphorylation at Ser-305 by AKT (AKT1, AKT2 or AKT3) suppresses the nucleotidyltransferase activity. Phosphorylation at Ser-305 by CDK1 during mitosis leads to its inhibition, thereby preventing CGAS activation by self-DNA during mitosis. Dephosphorylated at Ser-305 by protein phosphatase PP1 upon mitotic exit. Post-translationally, ubiquitinated at Lys-414 via 'Lys-48'-linked polyubiquitin chains, leading to its SQSTM1-mediated autophagic degradation. Interaction with TRIM14 promotes recruitment of USP14, leading to deubiquitinate Lys-414 and stabilize CGAS. Ubiquitinated at Lys-173 and Lys-384 by RNF185 via 'Lys-27'-linked polyubiquitination, promoting CGAS cyclic GMP-AMP synthase activity. Monoubiquitination at Lys-347 by TRIM56 promotes oligomerization and subsequent activation. Monoubiquitination by TRIM41 promotes CGAS activation. Ubiquitination at Lys-285 and Lys-479 via 'Lys-48'-linked polyubiquitination promotes its degradation. Deubiquitination at Lys-285 by USP29 promotes its stabilization. Deubiquitinated by USP27X, promoting its stabilization. Ubiquitinated at Lys-411 via 'Lys-63'-linked polyubiquitin chains by MARCHF8, leading to the inhibition of its DNA binding ability. In cycling cells, nucleosome-bound CGAS is ubiquitinated at Lys-427 and Lys-428 via 'Lys-48'-linked polyubiquitin chains by the ECS(SPSB3) complex, leading to its degradation: ubiquitination and degradation of nuclear CGAS during G1 and G2 phases is required to promote low intranuclear CGAS abundance before the next mitotic cycle. Sumoylated at Lys-231 and Lys-479 by TRIM38 in uninfected cells and during the early phase of viral infection, promoting its stability by preventing ubiquitination at Lys-285 and Lys-479, and subsequent degradation. Desumoylated by SENP2 during the late phase of viral infection. Sumoylation at Lys-347, Lys-384 and Lys-394 prevents DNA-binding, oligomerization and nucleotidyltransferase activity. Desumoylation at Lys-347, Lys-384 and Lys-394 by SENP7 relieves inhibition and activates CGAS. In terms of processing, polyglutamylated by TTLL6 at Glu-286, leading to impair DNA-binding activity. Monoglutamylated at Glu-314 by TTLL4, leading to impair the nucleotidyltransferase activity. Deglutamylated by AGBL5/CCP5 and AGBL6/CCP6. Post-translationally, acetylation at Lys-384, Lys-394 and Lys-414 inhibits the cyclic GMP-AMP synthase activity. Deacetylated upon cytosolic DNA challenge such as viral infections. Acetylation can be mediated by aspirin (acetylsalicylate) drug, which directly acetylates CGAS. Acetylation by aspirin efficiently inhibits CGAS-mediated immune responses and is able to suppress self-DNA-induced autoimmunity. Acetylation at Lys-47, Lys-56, Lys-62 and Lys-83 by KAT5 increases the cyclic GMP-AMP synthase activity by promoting DNA-binding and subsequent activation. Proteolytically cleaved by apoptotic caspases during apoptosis, leading to its inactivation. The damage of the nucleus and the mitochondria during apoptosis leads to leakage of nuclear and mitochondrial DNA, which activate CGAS: cleavage and inactivation during apoptosis in required to prevent cytokine overproduction. Cleaved by CASP3 at Asp-319 during virus-induced apoptosis, thereby inactivating it and preventing cytokine overproduction. Cleaved by CASP1 at Asp-140 and Asp-157 upon DNA virus infection; the cleavage impairs cGAMP production. Also cleaved by the pyroptotic CASP4 and CASP5 during non-canonical inflammasome activation; they don't cut at the same sites than CASP1. In terms of processing, degraded via selective autophagy following interaction with IRGM. IRGM promotes CGAS recruitment to autophagosome membranes, promoting its SQSTM1/p62-dependent autophagic degradation. Post-translationally, poly-ADP-ribosylation at Asp-191 by PARP1 impairs DNA-binding, thereby preventing the cyclic GMP-AMP synthase activity. Palmitoylation at Cys-474 by ZDHHC18 impairs DNA-binding, thereby preventing the cyclic GMP-AMP synthase activity. Palmitoylation at Cys-404 and Cys-405 by ZDHHC9 promotes homodimerization and cyclic GMP-AMP synthase activity. Depalmitoylation at Cys-404 and Cys-405 by LYPLAL1 impairs homodimerization and cyclic GMP-AMP synthase activity. In terms of processing, monomethylated at Lys-506 by SETD7. Monomethylation promotes interaction with SGF29, preventing interaction between PARP1 nad SGF29. Demethylation by RIOX1 promotes interaction with PARP1, followed by PARP1 inactivation. Post-translationally, lactylation by AARS2 prevents ability to undergo liquid-liquid phase separation (LLPS), thereby inhibiting CGAS activation. (Microbial infection) Deamidated on 'Asn-210' by herpes simplex virus 1 protein UL37. This modification significantly reduces CGAS-dependent cGAMP production and innate immune signaling induced by dsDNA. In terms of processing, (Microbial infection) Degraded by an autophagy-mediated mechanism in presence of Chikungunya virus capsid protein. In terms of tissue distribution, expressed in the monocytic cell line THP1.

It localises to the nucleus. It is found in the chromosome. The protein localises to the cell membrane. Its subcellular location is the cytoplasm. The protein resides in the cytosol. The enzyme catalyses GTP + ATP = 2',3'-cGAMP + 2 diphosphate. The catalysed reaction is GTP + ATP = pppGp(2'-5')A + diphosphate. It carries out the reaction pppGp(2'-5')A = 2',3'-cGAMP + diphosphate. With respect to regulation, the enzyme activity is strongly increased by double-stranded DNA (dsDNA), but not by single-stranded DNA or RNA. DNA-binding induces the formation of liquid-like droplets in which CGAS is activated. Liquid-like droplets also create a selective environment that restricts entry of negative regulators, such as TREX1 or BANF1/BAF, allowing sensing of DNA. A number of mechanisms exist to restrict its activity toward self-DNA. The nucleotidyltransferase activity is inhibited in the nucleus via its association with nucleosomes: interacts with the acidic patch of histones H2A and H2B, thereby blocking DNA-binding and subsequent activation. CGAS is also inactive when associated with mitotic chromatin. Chromatin-bound CGAS cannot be activated by exogenous DNA in mitotic cells: phosphorylation of the N-terminal disordered part by AURKB during the G2-M transition blocks CGAS liquid phase separation and activation. Activity toward self-DNA is inhibited by BANF1/BAF upon acute loss of nuclear membrane integrity: BANF1/BAF acts by outcompeting CGAS for DNA-binding, thereby preventing CGAS activation. DNA-induced activation at micronuclei is also limited by TREX1, which degrades micronuclear DNA upon nuclear envelope rupture, thereby preventing CGAS activation. CGAS can be released from nucleosomes and activated by MRE11 component of the MRN complex, which displaces CGAS from acidic-patch-mediated sequestration. Acetylation at Lys-384, Lys-394 and Lys-414 inhibits the cyclic GMP-AMP synthase activity. Inhibited by aspirin (acetylsalicylate) drug, which acetylates CGAS. Acetylation by KAT5 increases the cyclic GMP-AMP synthase activity by promoting DNA-binding and subsequent activation. Phosphorylation at Ser-305 suppresses the nucleotidyltransferase activity. Phosphorylation at Ser-435 promotes the cyclic GMP-AMP synthase activity. Phosphorylation at Thr-68 and Ser-213 inhibits its cyclic GMP-AMP synthase activity. Ubiquitination at Lys-173 and Lys-384 via 'Lys-27'-linked polyubiquitination enhances the cyclic GMP-AMP synthase activity. Monoubiquitination at Lys-347 promotes oligomerization and subsequent activation. Sumoylation at Lys-347, Lys-384 and Lys-394 prevents DNA-binding, oligomerization and nucleotidyltransferase activity. The enzyme activity is impaired by the cleavage at Asp-140 and Asp-157 produced by CASP1. In addition to DNA, also activated by collided ribosomes upon translation stress: specifically binds collided ribosomes, promoting its activation and triggering type-I interferon production. Strongly inhibited by compound PF-06928215, which is specific for human protein. Inhibited by small-molecule inhibitors with a pyridoindole tricyclic core G108, G140 and G150. Its activity is regulated as follows. (Microbial infection) Nucleotidyltransferase activity is inhibited by different herpesvirus tegument proteins (Herpes simplex virus 1 tegument protein VP22, herpes virus 8 protein ORF52 and herpesvirus 3 tegument protein VP22/ORF9). Viral tegument proteins act by disrupting liquid-like droplets in which CGAS is activated, thereby preventing CGAS activity. Nucleotidyltransferase that catalyzes the formation of cyclic GMP-AMP (2',3'-cGAMP) from ATP and GTP and plays a key role in innate immunity. Catalysis involves both the formation of a 2',5' phosphodiester linkage at the GpA step and the formation of a 3',5' phosphodiester linkage at the ApG step, producing c[G(2',5')pA(3',5')p]. Acts as a key DNA sensor: directly binds double-stranded DNA (dsDNA), inducing the formation of liquid-like droplets in which CGAS is activated, leading to synthesis of 2',3'-cGAMP, a second messenger that binds to and activates STING1, thereby triggering type-I interferon production. Preferentially recognizes and binds curved long dsDNAs of a minimal length of 40 bp. Acts as a key foreign DNA sensor, the presence of double-stranded DNA (dsDNA) in the cytoplasm being a danger signal that triggers the immune responses. Has antiviral activity by sensing the presence of dsDNA from DNA viruses in the cytoplasm. Also acts as an innate immune sensor of infection by retroviruses, such as HIV-2, by detecting the presence of reverse-transcribed DNA in the cytosol. In contrast, HIV-1 is poorly sensed by CGAS, due to its capsid that cloaks viral DNA from CGAS detection. Detection of retroviral reverse-transcribed DNA in the cytosol may be indirect and be mediated via interaction with PQBP1, which directly binds reverse-transcribed retroviral DNA. Also detects the presence of DNA from bacteria, such as M.tuberculosis. 2',3'-cGAMP can be transferred from producing cells to neighboring cells through gap junctions, leading to promote STING1 activation and convey immune response to connecting cells. 2',3'-cGAMP can also be transferred between cells by virtue of packaging within viral particles contributing to IFN-induction in newly infected cells in a cGAS-independent but STING1-dependent manner. Also senses the presence of neutrophil extracellular traps (NETs) that are translocated to the cytosol following phagocytosis, leading to synthesis of 2',3'-cGAMP. In addition to foreign DNA, can also be activated by endogenous nuclear or mitochondrial DNA. When self-DNA leaks into the cytosol during cellular stress (such as mitochondrial stress, SARS-CoV-2 infection causing severe COVID-19 disease, DNA damage, mitotic arrest or senescence), or is present in form of cytosolic micronuclei, CGAS is activated leading to a state of sterile inflammation. Acts as a regulator of cellular senescence by binding to cytosolic chromatin fragments that are present in senescent cells, leading to trigger type-I interferon production via STING1 and promote cellular senescence. Also involved in the inflammatory response to genome instability and double-stranded DNA breaks: acts by localizing to micronuclei arising from genome instability. Micronuclei, which are frequently found in cancer cells, consist of chromatin surrounded by their own nuclear membrane: following breakdown of the micronuclear envelope, a process associated with chromothripsis, CGAS binds self-DNA exposed to the cytosol, leading to 2',3'-cGAMP synthesis and subsequent activation of STING1 and type-I interferon production. Activated in response to prolonged mitotic arrest, promoting mitotic cell death. In a healthy cell, CGAS is however kept inactive even in cellular events that directly expose it to self-DNA, such as mitosis, when cGAS associates with chromatin directly after nuclear envelope breakdown or remains in the form of postmitotic persistent nuclear cGAS pools bound to chromatin. Nuclear CGAS is inactivated by chromatin via direct interaction with nucleosomes, which block CGAS from DNA binding and thus prevent CGAS-induced autoimmunity. Also acts as a suppressor of DNA repair in response to DNA damage: inhibits homologous recombination repair by interacting with PARP1, the CGAS-PARP1 interaction leading to impede the formation of the PARP1-TIMELESS complex. In addition to DNA, also sense translation stress: in response to translation stress, translocates to the cytosol and associates with collided ribosomes, promoting its activation and triggering type-I interferon production. In contrast to other mammals, human CGAS displays species-specific mechanisms of DNA recognition and produces less 2',3'-cGAMP, allowing a more fine-tuned response to pathogens. The protein is Cyclic GMP-AMP synthase of Homo sapiens (Human).